A 247-amino-acid chain; its full sequence is Oil body-associated protein 2A (247 aa).

A disordered region spans residues Met-1 to Lys-26.

It belongs to the OBAP family.

The chain is Oil body-associated protein 2A from Arabidopsis thaliana (Mouse-ear cress).